The chain runs to 506 residues: Arabinose import ATP-binding protein AraG (506 aa).

ABC transporter domains lie at 10 to 245 (LEFC…MVGR) and 253 to 501 (YRSR…MLGN). 42-49 (GENGAGKS) contributes to the ATP binding site.

This sequence belongs to the ABC transporter superfamily. Arabinose importer (TC 3.A.1.2.2) family. The complex is composed of two ATP-binding proteins (AraG), two transmembrane proteins (AraH) and a solute-binding protein (AraF).

It is found in the cell inner membrane. The enzyme catalyses L-arabinose(out) + ATP + H2O = L-arabinose(in) + ADP + phosphate + H(+). In terms of biological role, part of the ABC transporter complex AraFGH involved in arabinose import. Responsible for energy coupling to the transport system. This chain is Arabinose import ATP-binding protein AraG, found in Vibrio parahaemolyticus serotype O3:K6 (strain RIMD 2210633).